Reading from the N-terminus, the 422-residue chain is Adhesin YadA (422 aa).

The N-terminal stretch at 1–25 is a signal peptide; the sequence is MTKDFKISVSAALISALFSSPYAFA. Positions 26–330 are surface exposed passenger domain; that stretch reads NNDEVHFTAV…KKAIRESNQY (305 aa). Residues 206-236 adopt a coiled-coil conformation; that stretch reads VNVAQLKKEIEKTQVNANKKSAEVLGIANNY. The outer membrane translocation of the passenger domain stretch occupies residues 331-368; it reads TDHKFRQLDNRLDKLDTRVDKGLASSAALNSLFQPYGV. The next 4 beta stranded transmembrane spans lie at 369-379, 383-394, 401-407, and 411-422; these read GKVNFTAGVGG, SQALAIGSGYRV, KAGVAYA, and DVMYNASFNIEW. The tract at residues 369–422 is translocator domain; the sequence is GKVNFTAGVGGYRSSQALAIGSGYRVNESVALKAGVAYAGSSDVMYNASFNIEW.

This sequence belongs to the autotransporter-2 (AT-2) (TC 1.B.40) family. Homotrimer; trimers are very stable, not disrupted by heating at 95 degrees Celsius for 10 minutes in SDS sample buffer.

It localises to the cell surface. The protein localises to the cell outer membrane. Functionally, collagen-binding outer membrane protein forming a fibrillar matrix on the bacterial cell surface and phagocytosis resistance. Promotes initial attachment and invasion of eukaryotic cells. Also protects the bacteria by being responsible for agglutination, serum resistance and complement inactivation. Gly-389 plays an important role in this protein; replacing it with increasingly large polar residues decreases expression levels and trimer stability. Residues larger than Ser (Thr, Asn or His) significantly decrease serume resistance and bacterial autoagglution without affecting adhesion to host cells or host cell cytokine production. The sequence is that of Adhesin YadA from Yersinia enterocolitica serotype O:8 / biotype 1B (strain NCTC 13174 / 8081).